A 111-amino-acid polypeptide reads, in one-letter code: Nucleoid-associated protein PputW619_3586 (111 aa).

The segment at 87–111 (EQSSQEKMGGMTAGMQLPPGFKMPF) is disordered.

The protein belongs to the YbaB/EbfC family. Homodimer.

It is found in the cytoplasm. Its subcellular location is the nucleoid. Binds to DNA and alters its conformation. May be involved in regulation of gene expression, nucleoid organization and DNA protection. The sequence is that of Nucleoid-associated protein PputW619_3586 from Pseudomonas putida (strain W619).